A 477-amino-acid chain; its full sequence is PTS system glucose-specific EIICB component (477 aa).

Over 1–14 (MFKNAFANLQKVGK) the chain is Cytoplasmic. The PTS EIIC type-1 domain maps to 1 to 388 (MFKNAFANLQ…LDLKTPGRED (388 aa)). A helical transmembrane segment spans residues 15–35 (SLMLPVSVLPIAGILLGVGSA). At 36–50 (NFSWLPAVVSHVMAE) the chain is on the periplasmic side. A helical transmembrane segment spans residues 51-71 (AGGSVFANMPLIFAIGVALGF). Topologically, residues 72-79 (TNNDGVSA) are cytoplasmic. The chain crosses the membrane as a helical span at residues 80–100 (LAAVVAYGIMVKTMAVVAPLV). Over 101 to 111 (LHLPAEEIAAK) the chain is Periplasmic. The chain crosses the membrane as a helical span at residues 112-132 (HLADTGVLGGIISGAIAAYMF). At 133–151 (NRFYRIKLPEYLGFFAGKR) the chain is on the cytoplasmic side. The chain crosses the membrane as a helical span at residues 152–172 (FVPIISGLAAIFTGVVLSFVW). The Periplasmic portion of the chain corresponds to 173-190 (PPIGTAIQAFSQWAAYQN). The chain crosses the membrane as a helical span at residues 191 to 211 (PVVAFGIYGFIERCLVPFGLH). The Cytoplasmic portion of the chain corresponds to 212–248 (HIWNVPFQMQIGEYTNAAGQVFHGDIPRYMAGDPTAG). Residues 249–269 (MLSGGFLFKMYGLPAAAIAIW) traverse the membrane as a helical segment. The Periplasmic portion of the chain corresponds to 270 to 279 (HSAKPENRAK). Residues 280 to 300 (VGGIMISAALTSFLTGITEPI) form a helical membrane-spanning segment. Topologically, residues 301 to 309 (EFSFMFVAP) are cytoplasmic. The chain crosses the membrane as a helical span at residues 310–330 (ILYIIHAILAGLAFPICILLG). Residues 331–355 (MRDGTSFSHGLIDFIVLSGNSSKLW) lie on the Periplasmic side of the membrane. The helical transmembrane segment at 356-376 (LFPIVGAGYAIVYYTVFRVLI) threads the bilayer. Residues 377 to 477 (KALDLKTPGR…TEMDEYIRNS (101 aa)) are Cytoplasmic-facing. A PTS EIIB type-1 domain is found at 399–477 (SEMAPALVAA…TEMDEYIRNS (79 aa)). Cysteine 421 acts as the Phosphocysteine intermediate; for EIIB activity in catalysis. At cysteine 421 the chain carries Phosphocysteine.

The protein localises to the cell inner membrane. It carries out the reaction N(pros)-phospho-L-histidyl-[protein] + D-glucose(out) = D-glucose 6-phosphate(in) + L-histidyl-[protein]. Its function is as follows. The phosphoenolpyruvate-dependent sugar phosphotransferase system (sugar PTS), a major carbohydrate active transport system, catalyzes the phosphorylation of incoming sugar substrates concomitantly with their translocation across the cell membrane. The enzyme II complex composed of PtsG and Crr is involved in glucose transport. Also functions as a chemoreceptor monitoring the environment for changes in sugar concentration. It can also phosphorylate mannose, methyl alpha-glucoside and 2-deoxy-glucose. The chain is PTS system glucose-specific EIICB component (ptsG) from Salmonella typhimurium (strain LT2 / SGSC1412 / ATCC 700720).